A 191-amino-acid chain; its full sequence is MPDGEVNKLRDVIDKKILDARRVFFSEPVTDKSAADAIKKLWYLELSHPGQPIVFVINSPGGSVDAGFAVWDQIKMMTSPVTTVVTGLAASMGSVLSLCAAPGRRFATPHSRIMIHQPSIGGPITGQATDLDIHAREILKTKKRIVDVYLEATGQPREVIEKAIDRDMWMTADEAKDFGLLDGILFSFDDL.

Residue Ser91 is the Nucleophile of the active site. His116 is an active-site residue.

The protein belongs to the peptidase S14 family. Fourteen ClpP subunits assemble into 2 heptameric rings which stack back to back to give a disk-like structure with a central cavity, resembling the structure of eukaryotic proteasomes.

It localises to the cytoplasm. The enzyme catalyses Hydrolysis of proteins to small peptides in the presence of ATP and magnesium. alpha-casein is the usual test substrate. In the absence of ATP, only oligopeptides shorter than five residues are hydrolyzed (such as succinyl-Leu-Tyr-|-NHMec, and Leu-Tyr-Leu-|-Tyr-Trp, in which cleavage of the -Tyr-|-Leu- and -Tyr-|-Trp bonds also occurs).. In terms of biological role, cleaves peptides in various proteins in a process that requires ATP hydrolysis. Has a chymotrypsin-like activity. Plays a major role in the degradation of misfolded proteins. This chain is ATP-dependent Clp protease proteolytic subunit 1, found in Chlamydia caviae (strain ATCC VR-813 / DSM 19441 / 03DC25 / GPIC) (Chlamydophila caviae).